Consider the following 509-residue polypeptide: Histidine ammonia-lyase (509 aa).

Positions 144 to 146 (ASG) form a cross-link, 5-imidazolinone (Ala-Gly). Serine 145 carries the 2,3-didehydroalanine (Ser) modification.

This sequence belongs to the PAL/histidase family. Post-translationally, contains an active site 4-methylidene-imidazol-5-one (MIO), which is formed autocatalytically by cyclization and dehydration of residues Ala-Ser-Gly.

The protein resides in the cytoplasm. The enzyme catalyses L-histidine = trans-urocanate + NH4(+). The protein operates within amino-acid degradation; L-histidine degradation into L-glutamate; N-formimidoyl-L-glutamate from L-histidine: step 1/3. The sequence is that of Histidine ammonia-lyase from Pseudoalteromonas atlantica (strain T6c / ATCC BAA-1087).